The following is a 372-amino-acid chain: Histidine protein methyltransferase 1 homolog (372 aa).

Disordered regions lie at residues 30-55 (SKELSVSESQKGEERDRKCSAEQFDL) and 68-103 (NAAPSQDTDSPLSAASSSRNLEPHGKQPSLRAAKEH). The segment covering 39–49 (QKGEERDRKCS) has biased composition (basic and acidic residues). A compositionally biased stretch (polar residues) spans 70 to 87 (APSQDTDSPLSAASSSRN). Phosphoserine is present on residues S72 and S77. At H154 the chain carries Tele-methylhistidine; by autocatalysis. S-adenosyl-L-methionine-binding positions include 168–172 (IWECT), G195, and 216–218 (QDY). Positions 247–253 (PDVKRCR) match the Nuclear localization signal motif. Residues 268–270 (GEW) and S293 contribute to the S-adenosyl-L-methionine site.

Belongs to the methyltransferase superfamily. METTL18 family. Interacts with GRWD1 and members of the heat shock protein 90 and 70 families; these proteins may possibly be methylation substrates for the enzyme. Post-translationally, monomethylated at His-154 through automethylation. Automethylation at His-154 positively regulates the methyltransferase activity toward RPL3. Probably methylated on other residues.

It is found in the cytoplasm. Its subcellular location is the cytosol. It localises to the nucleus. The protein localises to the nucleolus. It catalyses the reaction L-histidyl-[protein] + S-adenosyl-L-methionine = N(tele)-methyl-L-histidyl-[protein] + S-adenosyl-L-homocysteine + H(+). Protein-L-histidine N-tele-methyltransferase that specifically monomethylates RPL3, thereby regulating translation elongation. Histidine methylation of RPL3 regulates translation elongation by slowing ribosome traversal on tyrosine codons: slower elongation provides enough time for proper folding of synthesized proteins and prevents cellular aggregation of tyrosine-rich proteins. The sequence is that of Histidine protein methyltransferase 1 homolog from Homo sapiens (Human).